Here is a 40-residue protein sequence, read N- to C-terminus: Serine proteinase-like BMK-CBP (40 aa).

A Peptidase S1 domain is found at 1–40 (IFGGTFAKNGEYPWMVVIDLPEFACGGVLISKKFVLTAAH). H40 serves as the catalytic Charge relay system.

It belongs to the peptidase S1 family. In terms of tissue distribution, expressed by the venom gland.

It is found in the secreted. Functionally, binds in a dose-dependent manner to the breast cancer cell line MCF-7. This chain is Serine proteinase-like BMK-CBP, found in Olivierus martensii (Manchurian scorpion).